Here is a 341-residue protein sequence, read N- to C-terminus: Large ribosomal subunit protein uL10 (341 aa).

The interval 301–341 (EAAPAAAPAAEEKAEEEKKEEEEEKKEDQELSGLDSIFGGF) is disordered.

Belongs to the universal ribosomal protein uL10 family. In terms of assembly, part of the 50S ribosomal subunit. Forms part of the ribosomal stalk which helps the ribosome interact with GTP-bound translation factors. Forms a heptameric L10(L12)2(L12)2(L12)2 complex, where L10 forms an elongated spine to which the L12 dimers bind in a sequential fashion.

Functionally, forms part of the ribosomal stalk, playing a central role in the interaction of the ribosome with GTP-bound translation factors. The chain is Large ribosomal subunit protein uL10 from Aeropyrum pernix (strain ATCC 700893 / DSM 11879 / JCM 9820 / NBRC 100138 / K1).